The sequence spans 130 residues: Small ribosomal subunit protein uS9 (130 aa).

It belongs to the universal ribosomal protein uS9 family.

The protein is Small ribosomal subunit protein uS9 of Onion yellows phytoplasma (strain OY-M).